We begin with the raw amino-acid sequence, 251 residues long: Probable transcriptional regulatory protein Francci3_1368 (251 aa).

It belongs to the TACO1 family.

Its subcellular location is the cytoplasm. This is Probable transcriptional regulatory protein Francci3_1368 from Frankia casuarinae (strain DSM 45818 / CECT 9043 / HFP020203 / CcI3).